A 113-amino-acid polypeptide reads, in one-letter code: Ranasmurfin (113 aa).

2',4',5'-topaquinone is present on tyrosine 2. The segment at residues 2–31 is a cross-link (lysine tyrosylquinone (Tyr-Lys)); sequence YACSFPPSEIPGSKECLAEALQKHQGFKKK. Disulfide bonds link cysteine 4–cysteine 62, cysteine 17–cysteine 65, and cysteine 37–cysteine 101. Serine 9 is modified (aminomalonic acid (Ser); in chain B). A cross-link (S-cysteinyl 3-(oxidosulfanyl)alanine (Cys-Cys); in chain B) is located at residues 17-65; it reads CLAEALQKHQGFKKKSYALICAYLNYKEDAENYERAAEDFDSAVKCTGC. A cross-link (lysine tyrosylquinone (Lys-Tyr)) is located at residues 30 to 108; that stretch reads KKSYALICAY…SLCTLFQKLY (79 aa). Cysteine 65 bears the Cysteine sulfenic acid (-SOH); in chain B mark. Tyrosine 108 bears the 2',4',5'-topaquinone mark. The Zn(2+) site is built by tyrosine 108 and histidine 112. A 5'-tyrosyl-5'-aminotyrosine (Tyr-Tyr) (interchain with Y-108) cross-link involves residue tyrosine 108.

As to quaternary structure, homodimer. The two chains, designated A and B, differ in their modifications, but not, it is thought, in their sequence. Zn(2+) is required as a cofactor. In terms of tissue distribution, foam nest.

The protein localises to the secreted. The polypeptide is Ranasmurfin (Polypedates leucomystax (Common tree frog)).